The primary structure comprises 160 residues: D-aminoacyl-tRNA deacylase (160 aa).

The short motif at 146-147 (GP) is the Gly-cisPro motif, important for rejection of L-amino acids element.

It belongs to the DTD family. In terms of assembly, homodimer.

It is found in the cytoplasm. It carries out the reaction glycyl-tRNA(Ala) + H2O = tRNA(Ala) + glycine + H(+). The enzyme catalyses a D-aminoacyl-tRNA + H2O = a tRNA + a D-alpha-amino acid + H(+). Functionally, an aminoacyl-tRNA editing enzyme that deacylates mischarged D-aminoacyl-tRNAs. Also deacylates mischarged glycyl-tRNA(Ala), protecting cells against glycine mischarging by AlaRS. Acts via tRNA-based rather than protein-based catalysis; rejects L-amino acids rather than detecting D-amino acids in the active site. By recycling D-aminoacyl-tRNA to D-amino acids and free tRNA molecules, this enzyme counteracts the toxicity associated with the formation of D-aminoacyl-tRNA entities in vivo and helps enforce protein L-homochirality. In Desulfovibrio desulfuricans (strain ATCC 27774 / DSM 6949 / MB), this protein is D-aminoacyl-tRNA deacylase.